A 186-amino-acid polypeptide reads, in one-letter code: Negative modulator of initiation of replication (186 aa).

Belongs to the SeqA family. As to quaternary structure, homodimer. Polymerizes to form helical filaments.

The protein resides in the cytoplasm. In terms of biological role, negative regulator of replication initiation, which contributes to regulation of DNA replication and ensures that replication initiation occurs exactly once per chromosome per cell cycle. Binds to pairs of hemimethylated GATC sequences in the oriC region, thus preventing assembly of replication proteins and re-initiation at newly replicated origins. Repression is relieved when the region becomes fully methylated. The protein is Negative modulator of initiation of replication of Glaesserella parasuis serovar 5 (strain SH0165) (Haemophilus parasuis).